A 375-amino-acid polypeptide reads, in one-letter code: MSSGHAEVVGGGIGGLTAATALALRGWTVRLHERDTRIRTVGAGIYVWDNGLEALDTIGAAAEGLDDAYEAPAITVRASDGRPLYRIDVNQPGGARCVTLLRDRLIGALHVAAEHAGVEVCTGSAAVSATADGTVEFSTGTSTRADLVVAADGVHSLLRDRLGISYRRIRMRQGAARVMVSGERPFIPGMDVDQHHEFLGGRRRLLYTPCTATQTYLAFVADNDDTATVGPELDLAAWARAFPLLVPVFDAARGRALIRWDNFELIRLSTWSHGRVAVLGDAAHAQPPYVGQGGGTAMNSAVGLAAAVSESADVEDGLNRWEQALRPPIEKAQTTSYRMRLIGSVPEVLRGPLLGALGRSRSSATSQLIKKRSAA.

It belongs to the 3-hydroxybenzoate 6-hydroxylase family.

The enzyme catalyses 2-heptyl-4(1H)-quinolone + NADH + O2 + H(+) = 2-heptyl-3-hydroxy-4(1H)-quinolone + NAD(+) + H2O. Functionally, involved in the degradation pathway of the Pseudomonas aeruginosa quorum sensing signal molecule HHQ (2-heptyl-4(1H)-quinolone) to anthranilate. Catalyzes the hydroxylation of HHQ to PQS (2-heptyl-3-hydroxy-4(1H)-quinolone). This chain is 2-heptyl-3-hydroxy-4(1H)-quinolone synthase, found in Mycobacteroides abscessus (strain ATCC 19977 / DSM 44196 / CCUG 20993 / CIP 104536 / JCM 13569 / NCTC 13031 / TMC 1543 / L948) (Mycobacterium abscessus).